The primary structure comprises 197 residues: FMN-dependent NADH:quinone oxidoreductase (197 aa).

Ser10 contacts FMN.

This sequence belongs to the azoreductase type 1 family. In terms of assembly, homodimer. FMN is required as a cofactor.

It carries out the reaction 2 a quinone + NADH + H(+) = 2 a 1,4-benzosemiquinone + NAD(+). It catalyses the reaction N,N-dimethyl-1,4-phenylenediamine + anthranilate + 2 NAD(+) = 2-(4-dimethylaminophenyl)diazenylbenzoate + 2 NADH + 2 H(+). In terms of biological role, quinone reductase that provides resistance to thiol-specific stress caused by electrophilic quinones. Its function is as follows. Also exhibits azoreductase activity. Catalyzes the reductive cleavage of the azo bond in aromatic azo compounds to the corresponding amines. The polypeptide is FMN-dependent NADH:quinone oxidoreductase (Mycoplasma genitalium (strain ATCC 33530 / DSM 19775 / NCTC 10195 / G37) (Mycoplasmoides genitalium)).